Consider the following 313-residue polypeptide: Homoserine O-succinyltransferase (313 aa).

Residue Cys142 is the Acyl-thioester intermediate of the active site. Substrate is bound by residues Lys163 and Ser192. Catalysis depends on His235, which acts as the Proton acceptor. The active site involves Glu237. Arg249 is a binding site for substrate.

Belongs to the MetA family.

The protein resides in the cytoplasm. It carries out the reaction L-homoserine + succinyl-CoA = O-succinyl-L-homoserine + CoA. Its pathway is amino-acid biosynthesis; L-methionine biosynthesis via de novo pathway; O-succinyl-L-homoserine from L-homoserine: step 1/1. Its function is as follows. Transfers a succinyl group from succinyl-CoA to L-homoserine, forming succinyl-L-homoserine. This is Homoserine O-succinyltransferase from Shewanella oneidensis (strain ATCC 700550 / JCM 31522 / CIP 106686 / LMG 19005 / NCIMB 14063 / MR-1).